The primary structure comprises 1560 residues: uncharacterized protein (1560 aa).

Residues 1–46 (MEEIENAHYQNLENFNDETSEDVNDTSDDINKNNDDNNKYDDNNVN) form a disordered region. Over residues 15-28 (FNDETSEDVNDTSD) the composition is skewed to acidic residues. A compositionally biased stretch (basic and acidic residues) spans 29–46 (DINKNNDDNNKYDDNNVN). Coiled coils occupy residues 36–60 (DNNKYDDNNVNVLDDKNKLENEEDN) and 317–359 (KKNN…NNNN). The disordered stretch occupies residues 568 to 594 (KKKKKKNDHHERDSDNNNNDSNNNNYY). Positions 583–594 (NNNNDSNNNNYY) are enriched in low complexity. A coiled-coil region spans residues 1188-1239 (DTTNNILNKQNESLDNLKKNMYLSKNNYDNQLSSYKNTKQNKTNINEKYNNN). Transmembrane regions (helical) follow at residues 1271 to 1291 (LYISSMLYINIYLCQIFFILL) and 1314 to 1334 (LDYFYLLILLNFYSLFYILIS).

It localises to the membrane. This is an uncharacterized protein from Plasmodium falciparum (isolate 3D7).